A 371-amino-acid polypeptide reads, in one-letter code: Cytochrome b (371 aa).

Helical transmembrane passes span 25-45 (FGSM…FLAV), 69-90 (WMMQ…YIHI), 105-125 (WLSG…XXXX), and 170-190 (XXXX…LHIM). Residues H75 and H89 each coordinate heme b. X174 and H188 together coordinate heme b. H193 contributes to the a ubiquinone binding site. The next 4 helical transmembrane spans lie at 218–238 (YKDL…VSFL), 280–300 (LGGA…PFTH), 312–332 (IMQL…WAAT), and 339–358 (FTMI…ITNP).

The protein belongs to the cytochrome b family. The cytochrome bc1 complex contains 3 respiratory subunits (MT-CYB, CYC1 and UQCRFS1), 2 core proteins (UQCRC1 and UQCRC2) and probably 6 low-molecular weight proteins. The cofactor is heme b.

The protein localises to the mitochondrion inner membrane. In terms of biological role, component of the ubiquinol-cytochrome c reductase complex (complex III or cytochrome b-c1 complex) that is part of the mitochondrial respiratory chain. The b-c1 complex mediates electron transfer from ubiquinol to cytochrome c. Contributes to the generation of a proton gradient across the mitochondrial membrane that is then used for ATP synthesis. This chain is Cytochrome b (MT-CYB), found in Eryx jaculus (Javelin sand boa).